The following is a 276-amino-acid chain: NADPH-dependent 7-cyano-7-deazaguanine reductase (276 aa).

83-85 (IES) provides a ligand contact to substrate. An NADPH-binding site is contributed by 85–86 (SK). The active-site Thioimide intermediate is the Cys-184. The active-site Proton donor is the Asp-191. 223 to 224 (HE) serves as a coordination point for substrate. Position 252–253 (252–253 (RG)) interacts with NADPH.

The protein belongs to the GTP cyclohydrolase I family. QueF type 2 subfamily. In terms of assembly, homodimer.

The protein resides in the cytoplasm. The catalysed reaction is 7-aminomethyl-7-carbaguanine + 2 NADP(+) = 7-cyano-7-deazaguanine + 2 NADPH + 3 H(+). It participates in tRNA modification; tRNA-queuosine biosynthesis. In terms of biological role, catalyzes the NADPH-dependent reduction of 7-cyano-7-deazaguanine (preQ0) to 7-aminomethyl-7-deazaguanine (preQ1). In Desulfotalea psychrophila (strain LSv54 / DSM 12343), this protein is NADPH-dependent 7-cyano-7-deazaguanine reductase.